Reading from the N-terminus, the 732-residue chain is Catalase-peroxidase (732 aa).

Positions 97-220 form a cross-link, tryptophyl-tyrosyl-methioninium (Trp-Tyr) (with M-246); sequence WHSAGTYRTS…LAAVQMGLIY (124 aa). Residue H98 is the Proton acceptor of the active site. A cross-link (tryptophyl-tyrosyl-methioninium (Tyr-Met) (with W-97)) is located at residues 220 to 246; sequence YVNPEGPDGNPDPVAAGRDIRETFARM. H261 is a binding site for heme b.

The protein belongs to the peroxidase family. Peroxidase/catalase subfamily. Homodimer or homotetramer. Heme b is required as a cofactor. In terms of processing, formation of the three residue Trp-Tyr-Met cross-link is important for the catalase, but not the peroxidase activity of the enzyme.

It catalyses the reaction H2O2 + AH2 = A + 2 H2O. It carries out the reaction 2 H2O2 = O2 + 2 H2O. In terms of biological role, bifunctional enzyme with both catalase and broad-spectrum peroxidase activity. The protein is Catalase-peroxidase of Pelodictyon phaeoclathratiforme (strain DSM 5477 / BU-1).